The primary structure comprises 468 residues: Acetyl-CoA decarbonylase/synthase complex subunit gamma (468 aa).

The 4Fe-4S domain maps to 1-60; it reads MKINSPLEAYKYLPQTNCGECGEATCMAFASKLIDRSGKTSDCPPLIKEKKFAKKLAELD. [4Fe-4S] cluster is bound by residues cysteine 18, cysteine 21, cysteine 26, and cysteine 43.

As to quaternary structure, heterodimer of delta and gamma chains. The ACDS complex is made up of alpha, epsilon, beta, gamma and delta chains with a probable stoichiometry of (alpha(2)epsilon(2))(4)-beta(8)-(gamma(1)delta(1))(8). Requires corrinoid as cofactor. [4Fe-4S] cluster serves as cofactor.

It carries out the reaction 5,6,7,8-tetrahydrosarcinapterin + methyl-Co(III)-[corrinoid Fe-S protein] = 5-methyltetrahydrosarcinapterin + Co(I)-[corrinoid Fe-S protein] + H(+). It participates in one-carbon metabolism; methanogenesis from acetate. Its function is as follows. Part of a complex that catalyzes the reversible cleavage of acetyl-CoA, allowing growth on acetate as sole source of carbon and energy. The sequence is that of Acetyl-CoA decarbonylase/synthase complex subunit gamma from Methanosarcina acetivorans (strain ATCC 35395 / DSM 2834 / JCM 12185 / C2A).